The sequence spans 782 residues: Homeotic protein proboscipedia (782 aa).

6 disordered regions span residues 1–23 (MQEV…ESPL), 153–195 (PQTP…VPEN), 251–336 (MKHK…GISS), 358–380 (SSVS…KDDG), 439–493 (IATP…QQQP), and 547–586 (YYNY…ADFE). An Antp-type hexapeptide motif is present at residues 164–169 (EYPWMK). The segment at residues 198 to 257 (PRRLRTAYTNTQLLELEKEFHFNKYLCRPRRIEIAASLDLTERQVKVWFQNRRMKHKRQT) is a DNA-binding region (homeobox). Residues 308-321 (NNNTPSATNNNPSA) are compositionally biased toward low complexity. Over residues 322 to 336 (GNLTPNSSLETGISS) the composition is skewed to polar residues. Over residues 452–463 (NGSGGGPAGGYF) the composition is skewed to gly residues. A compositionally biased stretch (low complexity) spans 464-493 (PGYYPSPKQQQQVQQQQLHPQQQQLPQQQP). Residues 563–580 (QQHHHHAQHHQQQQHHQN) are compositionally biased toward basic residues.

It belongs to the Antp homeobox family. Proboscipedia subfamily.

It localises to the nucleus. Its function is as follows. Sequence-specific transcription factor which is part of a developmental regulatory system that provides cells with specific positional identities on the anterior-posterior axis. Controls development of mouthparts, and labial and maxillary palps. The chain is Homeotic protein proboscipedia (pb) from Drosophila melanogaster (Fruit fly).